Here is a 227-residue protein sequence, read N- to C-terminus: MAKSIYLIGGSKGGVGKSLVTMATVDYLQERGESVLLIESDTSNPDVWKAYKESTETELINLDEADGWIQLVNLCDSKPDSVVVINAAARNNKGVSAYGETLNSTLAELKRKLVTLWVINRQRDSLELLKEYMDAIPNADVHVVRNGHFGEEKKFELYNGSKLRTAVEERGGQSVTFPDMADRVSDDIYSKRMSISVALKELPIGNRAELTRWRNEAKKVLEGVIHE.

The sequence is that of Protein MobD (mobD) from Acidithiobacillus ferrooxidans (Thiobacillus ferrooxidans).